Consider the following 727-residue polypeptide: Two-component response regulator-like APRR7 (727 aa).

The interval 1-47 is disordered; that stretch reads MNANEEGEGSRYPITDRKTGETKFDRVESRTEKHSEEEKTNGITMDV. Positions 14-40 are enriched in basic and acidic residues; it reads ITDRKTGETKFDRVESRTEKHSEEEKT. The Response regulatory domain maps to 79–197; it reads RVLLVENDDC…ELKILWQHVW (119 aa). Disordered stretches follow at residues 203 to 265, 291 to 312, 339 to 416, 464 to 487, 509 to 560, and 606 to 670; these read SSGS…KKAV, NPEF…QEHD, KDEP…KTLD, SRYN…SLQD, ESLP…QPLP, and VNGS…SQRE. Over residues 246 to 259 the composition is skewed to low complexity; the sequence is ASDGSSDGSGAQSS. Composition is skewed to polar residues over residues 344–353, 467–487, and 519–535; these read SKTTGIMRQD, NPAS…SLQD, and VGSN…NNAF. A compositionally biased stretch (low complexity) spans 538–555; the sequence is PGAPKVSSAGSSSVKHSS. The span at 641 to 657 shows a compositional bias: gly residues; that stretch reads GKNGNGDGSGSGSGSGS. In terms of domain architecture, CCT spans 669 to 711; it reads REAALTKFRQKRKERCFRKKVRYQSRKKLAEQRPRVRGQFVRK.

This sequence belongs to the ARR-like family. In terms of processing, phosphorylated. Phosphorylation varies throughout the diurnal cycle.

Its subcellular location is the nucleus. Transcriptional repressor of CCA1 and LHY, and positive regulator of LWD1 and LWD2 expression. Represses the expression of other clock proteins and master regulators of plant growth, development and response to abiotic stress. Involved in the positive and negative feedback loops of the circadian clock. Controls photoperiodic flowering response and temperature compensation. Expression of several members of the ARR-like family is controlled by circadian rhythm. APRR9, APRR7, and APRR5 coordinately act on the upstream region of the target genes to repress their expression from noon until midnight. The particular coordinated sequential expression of APRR9, APRR7, APRR5, APRR3 and APPR1 result to circadian waves that may be at the basis of the endogenous circadian clock. The sequence is that of Two-component response regulator-like APRR7 (APRR7) from Arabidopsis thaliana (Mouse-ear cress).